We begin with the raw amino-acid sequence, 209 residues long: Small ribosomal subunit protein uS4 (209 aa).

The 67-residue stretch at 98 to 164 (RRLDNVVYRL…LPIKNAIELN (67 aa)) folds into the S4 RNA-binding domain.

The protein belongs to the universal ribosomal protein uS4 family. In terms of assembly, part of the 30S ribosomal subunit. Contacts protein S5. The interaction surface between S4 and S5 is involved in control of translational fidelity.

Its function is as follows. One of the primary rRNA binding proteins, it binds directly to 16S rRNA where it nucleates assembly of the body of the 30S subunit. With S5 and S12 plays an important role in translational accuracy. In Thermosipho melanesiensis (strain DSM 12029 / CIP 104789 / BI429), this protein is Small ribosomal subunit protein uS4.